Reading from the N-terminus, the 347-residue chain is Farnesyl pyrophosphate synthase (347 aa).

Residues lysine 50, arginine 53, and glutamine 88 each contribute to the isopentenyl diphosphate site. Mg(2+) contacts are provided by aspartate 95 and aspartate 99. Arginine 104 is a binding site for dimethylallyl diphosphate. An isopentenyl diphosphate-binding site is contributed by arginine 105. Residues lysine 192, threonine 193, glutamine 232, lysine 249, and lysine 258 each coordinate dimethylallyl diphosphate.

The protein belongs to the FPP/GGPP synthase family. Interacts with spo9. It depends on Mg(2+) as a cofactor.

The protein localises to the cytoplasm. Its subcellular location is the nucleus. The catalysed reaction is isopentenyl diphosphate + dimethylallyl diphosphate = (2E)-geranyl diphosphate + diphosphate. It catalyses the reaction isopentenyl diphosphate + (2E)-geranyl diphosphate = (2E,6E)-farnesyl diphosphate + diphosphate. The protein operates within isoprenoid biosynthesis; farnesyl diphosphate biosynthesis; farnesyl diphosphate from geranyl diphosphate and isopentenyl diphosphate: step 1/1. It participates in isoprenoid biosynthesis; geranyl diphosphate biosynthesis; geranyl diphosphate from dimethylallyl diphosphate and isopentenyl diphosphate: step 1/1. Functionally, farnesyl pyrophosphate synthase; part of the second module of ergosterol biosynthesis pathway that includes the middle steps of the pathway. Fps1 catalyzes the sequential condensation of isopentenyl pyrophosphate with dimethylallyl pyrophosphate, and then with the resultant geranylpyrophosphate to the ultimate product farnesyl pyrophosphate. The second module is carried out in the vacuole and involves the formation of farnesyl diphosphate, which is also an important intermediate in the biosynthesis of ubiquinone, dolichol, heme and prenylated proteins. Activity by the mevalonate kinase erg12 first converts mevalonate into 5-phosphomevalonate. 5-phosphomevalonate is then further converted to 5-diphosphomevalonate by the phosphomevalonate kinase erg8. The diphosphomevalonate decarboxylase mvd1 then produces isopentenyl diphosphate. The isopentenyl-diphosphate delta-isomerase idi1 then catalyzes the 1,3-allylic rearrangement of the homoallylic substrate isopentenyl (IPP) to its highly electrophilic allylic isomer, dimethylallyl diphosphate (DMAPP). Finally the farnesyl diphosphate synthase fps1 catalyzes the sequential condensation of isopentenyl pyrophosphate with dimethylallyl pyrophosphate, and then with the resultant geranylpyrophosphate to the ultimate product farnesyl pyrophosphate. The chain is Farnesyl pyrophosphate synthase from Schizosaccharomyces pombe (strain 972 / ATCC 24843) (Fission yeast).